Reading from the N-terminus, the 212-residue chain is Acyl-homoserine-lactone synthase (212 aa).

The protein belongs to the autoinducer synthase family.

It catalyses the reaction a fatty acyl-[ACP] + S-adenosyl-L-methionine = an N-acyl-L-homoserine lactone + S-methyl-5'-thioadenosine + holo-[ACP] + H(+). Required for the synthesis of OHHL (N-(3-oxohexanoyl)-L-homoserine lactone), an autoinducer molecule which binds to the EchR transcriptional regulator. The sequence is that of Acyl-homoserine-lactone synthase (echI) from Dickeya chrysanthemi (Pectobacterium chrysanthemi).